Reading from the N-terminus, the 230-residue chain is MVHPLLFLQFLSTKLQHLLHISDASANAVVYTWTVIVLLLVLSLIATRALKTIPSGVQNFMEVVVDGIENMIVETMGEHGRSFFPLIATLAIFILVSNLVGLIPGFYPPTANVNTTAACAIVVFLATHVVGIKHHGFHYLKHFMGPIWWLAPLMFFIEVIGHLSRPVSLTLRLFGNMNGHELVLMIFFALAPFLVPLPMMLMGVLVSFIQAFVFMLLAMIYIQGSLEEAH.

6 consecutive transmembrane segments (helical) span residues 26–46 (ANAV…SLIA), 83–103 (FFPL…VGLI), 112–132 (NVNT…VVGI), 143–163 (FMGP…IGHL), 182–202 (LVLM…MMLM), and 203–223 (GVLV…IYIQ).

It belongs to the ATPase A chain family. In terms of assembly, F-type ATPases have 2 components, CF(1) - the catalytic core - and CF(0) - the membrane proton channel. CF(1) has five subunits: alpha(3), beta(3), gamma(1), delta(1), epsilon(1). CF(0) has three main subunits: a(1), b(2) and c(9-12). The alpha and beta chains form an alternating ring which encloses part of the gamma chain. CF(1) is attached to CF(0) by a central stalk formed by the gamma and epsilon chains, while a peripheral stalk is formed by the delta and b chains.

The protein localises to the cell inner membrane. Key component of the proton channel; it plays a direct role in the translocation of protons across the membrane. This chain is ATP synthase subunit a, found in Trichlorobacter lovleyi (strain ATCC BAA-1151 / DSM 17278 / SZ) (Geobacter lovleyi).